The chain runs to 37 residues: Photosystem II reaction center protein Psb30 (37 aa).

A helical transmembrane segment spans residues 10–30 (LISLLLLTLIMLAGPAVIALW).

The protein belongs to the Psb30/Ycf12 family. In terms of assembly, PSII is composed of 1 copy each of membrane proteins PsbA, PsbB, PsbC, PsbD, PsbE, PsbF, PsbH, PsbI, PsbJ, PsbK, PsbL, PsbM, PsbT, PsbX, Psb30/Ycf12, peripheral proteins PsbO, CyanoQ (PsbQ), PsbU, PsbV and a large number of cofactors. It forms dimeric complexes.

The protein resides in the cell inner membrane. In terms of biological role, a core subunit of photosystem II (PSII), probably helps stabilize the reaction center. This chain is Photosystem II reaction center protein Psb30, found in Gloeobacter violaceus (strain ATCC 29082 / PCC 7421).